A 147-amino-acid chain; its full sequence is Flagellar assembly factor FliW (147 aa).

Belongs to the FliW family. As to quaternary structure, interacts with translational regulator CsrA and flagellin(s).

It localises to the cytoplasm. Functionally, acts as an anti-CsrA protein, binds CsrA and prevents it from repressing translation of its target genes, one of which is flagellin. Binds to flagellin and participates in the assembly of the flagellum. The sequence is that of Flagellar assembly factor FliW from Chromobacterium violaceum (strain ATCC 12472 / DSM 30191 / JCM 1249 / CCUG 213 / NBRC 12614 / NCIMB 9131 / NCTC 9757 / MK).